The primary structure comprises 451 residues: Ribosomal protein uS12 methylthiotransferase RimO (451 aa).

In terms of domain architecture, MTTase N-terminal spans 17–127 (PTIGFVSLGC…VLAQVHEHLP (111 aa)). The [4Fe-4S] cluster site is built by Cys26, Cys62, Cys91, Cys160, Cys164, and Cys167. Residues 146–383 (LTPRHYAYLK…MQLQQRISTE (238 aa)) enclose the Radical SAM core domain. The 66-residue stretch at 386-451 (KQKVGQTLPV…DEYDLWGTRV (66 aa)) folds into the TRAM domain.

The protein belongs to the methylthiotransferase family. RimO subfamily. [4Fe-4S] cluster is required as a cofactor.

It is found in the cytoplasm. It carries out the reaction L-aspartate(89)-[ribosomal protein uS12]-hydrogen + (sulfur carrier)-SH + AH2 + 2 S-adenosyl-L-methionine = 3-methylsulfanyl-L-aspartate(89)-[ribosomal protein uS12]-hydrogen + (sulfur carrier)-H + 5'-deoxyadenosine + L-methionine + A + S-adenosyl-L-homocysteine + 2 H(+). Catalyzes the methylthiolation of an aspartic acid residue of ribosomal protein uS12. This Cellvibrio japonicus (strain Ueda107) (Pseudomonas fluorescens subsp. cellulosa) protein is Ribosomal protein uS12 methylthiotransferase RimO.